A 483-amino-acid polypeptide reads, in one-letter code: Nuc-1 negative regulatory protein preg (483 aa).

Low complexity-rich tracts occupy residues 1-32 (MLTR…PRPS), 60-80 (SSRR…PISI), and 176-200 (ASAL…AVAV). Disordered stretches follow at residues 1-112 (MLTR…SRPQ), 164-234 (NTVG…SQGD), and 434-483 (CPEP…RHAT). The segment covering 435 to 473 (PEPEEADDEDEDEELDESDAIGDDDDDIDGEGGEREEET) has biased composition (acidic residues).

The protein belongs to the cyclin family.

Its function is as follows. Negative regulator, together with pgov, of the transcriptional activator nuc-1, which controls the expression of phosphorous acquisition enzymes. In Neurospora crassa (strain ATCC 24698 / 74-OR23-1A / CBS 708.71 / DSM 1257 / FGSC 987), this protein is Nuc-1 negative regulatory protein preg (preg).